The sequence spans 306 residues: D-alanine--D-alanine ligase B (306 aa).

Residues 101–303 (KLLWQGAGLP…FSQLVVRILE (203 aa)) enclose the ATP-grasp domain. Position 134–189 (134–189 (ISALGLPLIVKPSREGSSVGMTKVVEENALQGALSLAFQHDDEILIEKWLCGPEFT)) interacts with ATP. Asp-257, Glu-270, and Asn-272 together coordinate Mg(2+).

This sequence belongs to the D-alanine--D-alanine ligase family. Monomer. The cofactor is Mg(2+). Requires Mn(2+) as cofactor.

The protein localises to the cytoplasm. It catalyses the reaction 2 D-alanine + ATP = D-alanyl-D-alanine + ADP + phosphate + H(+). It functions in the pathway cell wall biogenesis; peptidoglycan biosynthesis. In terms of biological role, cell wall formation. The sequence is that of D-alanine--D-alanine ligase B (ddlB) from Salmonella typhimurium (strain LT2 / SGSC1412 / ATCC 700720).